Reading from the N-terminus, the 321-residue chain is Probable 3-hydroxyisobutyrate dehydrogenase, mitochondrial (321 aa).

NAD(+) is bound by residues 23-52 (KTVG…IVFD), 86-87 (LP), and threonine 117. The active site involves lysine 192. Lysine 267 contacts NAD(+).

The protein belongs to the HIBADH-related family. 3-hydroxyisobutyrate dehydrogenase subfamily.

It localises to the mitochondrion. The catalysed reaction is 3-hydroxy-2-methylpropanoate + NAD(+) = 2-methyl-3-oxopropanoate + NADH + H(+). The protein operates within amino-acid degradation; L-valine degradation. In Dictyostelium discoideum (Social amoeba), this protein is Probable 3-hydroxyisobutyrate dehydrogenase, mitochondrial (hibA).